The following is a 173-amino-acid chain: Translation initiation factor IF-3 (173 aa).

It belongs to the IF-3 family. In terms of assembly, monomer.

The protein localises to the cytoplasm. In terms of biological role, IF-3 binds to the 30S ribosomal subunit and shifts the equilibrium between 70S ribosomes and their 50S and 30S subunits in favor of the free subunits, thus enhancing the availability of 30S subunits on which protein synthesis initiation begins. This chain is Translation initiation factor IF-3, found in Bartonella bacilliformis (strain ATCC 35685 / KC583 / Herrer 020/F12,63).